Here is a 175-residue protein sequence, read N- to C-terminus: ATP synthase subunit b (175 aa).

The helical transmembrane segment at 14–34 (LNPNPGLIFWTALTFLIVLVI) threads the bilayer.

This sequence belongs to the ATPase B chain family. In terms of assembly, F-type ATPases have 2 components, F(1) - the catalytic core - and F(0) - the membrane proton channel. F(1) has five subunits: alpha(3), beta(3), gamma(1), delta(1), epsilon(1). F(0) has four main subunits: a(1), b(2) and c(10-14). The alpha and beta chains form an alternating ring which encloses part of the gamma chain. F(1) is attached to F(0) by a central stalk formed by the gamma and epsilon chains, while a peripheral stalk is formed by the delta and b chains.

The protein resides in the cell inner membrane. In terms of biological role, f(1)F(0) ATP synthase produces ATP from ADP in the presence of a proton or sodium gradient. F-type ATPases consist of two structural domains, F(1) containing the extramembraneous catalytic core and F(0) containing the membrane proton channel, linked together by a central stalk and a peripheral stalk. During catalysis, ATP synthesis in the catalytic domain of F(1) is coupled via a rotary mechanism of the central stalk subunits to proton translocation. Component of the F(0) channel, it forms part of the peripheral stalk, linking F(1) to F(0). This chain is ATP synthase subunit b, found in Chlorobaculum tepidum (strain ATCC 49652 / DSM 12025 / NBRC 103806 / TLS) (Chlorobium tepidum).